A 362-amino-acid chain; its full sequence is Serpentine receptor class delta-2 (362 aa).

A run of 7 helical transmembrane segments spans residues 27 to 47, 57 to 77, 104 to 124, 144 to 164, 209 to 229, 264 to 284, and 292 to 312; these read LSCL…YLIW, YAIY…ISFF, FCYF…WILL, LIRN…VYVF, LISI…ILYF, GIPI…FGII, and ITFR…IIFV.

It belongs to the nematode receptor-like protein srd family.

Its subcellular location is the membrane. In terms of biological role, thought to be a chemosensory receptor. The polypeptide is Serpentine receptor class delta-2 (srd-2) (Caenorhabditis elegans).